The sequence spans 321 residues: tRNA-dihydrouridine synthase B (321 aa).

FMN-binding positions include 16–18 (PMA) and glutamine 70. Cysteine 100 serves as the catalytic Proton donor. FMN-binding positions include lysine 139, 200-202 (NGD), and 224-225 (GR).

The protein belongs to the Dus family. DusB subfamily. It depends on FMN as a cofactor.

It catalyses the reaction a 5,6-dihydrouridine in tRNA + NAD(+) = a uridine in tRNA + NADH + H(+). The catalysed reaction is a 5,6-dihydrouridine in tRNA + NADP(+) = a uridine in tRNA + NADPH + H(+). Its function is as follows. Catalyzes the synthesis of 5,6-dihydrouridine (D), a modified base found in the D-loop of most tRNAs, via the reduction of the C5-C6 double bond in target uridines. The chain is tRNA-dihydrouridine synthase B from Yersinia pestis.